The sequence spans 203 residues: Proline-rich protein 1 (203 aa).

An N-terminal signal peptide occupies residues 1–20; sequence MMKLGLYLTLLFLSVWTVSG.

Component of the acid-insoluble and acid-soluble organic matrix of calcified layers of the shell (at protein level).

It is found in the secreted. This is Proline-rich protein 1 from Lottia gigantea (Giant owl limpet).